The sequence spans 127 residues: Small ribosomal subunit protein uS11 (127 aa).

This sequence belongs to the universal ribosomal protein uS11 family. As to quaternary structure, part of the 30S ribosomal subunit. Interacts with proteins S7 and S18. Binds to IF-3.

Functionally, located on the platform of the 30S subunit, it bridges several disparate RNA helices of the 16S rRNA. Forms part of the Shine-Dalgarno cleft in the 70S ribosome. This Prosthecochloris aestuarii (strain DSM 271 / SK 413) protein is Small ribosomal subunit protein uS11.